The following is a 1217-amino-acid chain: METSSISTVEDKPPQHQVFINFRGADLRRRFVSHLVTALKLNNINVFIDDYEDRGQPLDVLLKRIEESKIVLAIFSGNYTESVWCVRELEKIKDCTDEGTLVAIPIFYKLEPSTVRDLKGKFGDRFRSMAKGDERKKKWKEAFNLIPNIMGIIIDKKSVESEKVNEIVKAVKTALTGIPPEGSHNAVVGALGNSDAGTSSGDKKHETFGNEQRLKDLEEKLDRDKYKGTRIIGVVGMPGIGKTTLLKELYKTWQGKFSRHALIDQIRVKSKHLELDRLPQMLLGELSKLNNPHVDNLKDPYSQLHERKVLVVLDDVSKREQIDALREILDWIKEGKEGSRVVIATSDMSLTNGLVDDTYMVQNLNHRDSLQLFHYHAFIDDQANPQKKDFMKLSEGFVHYARGHPLALKVLGGELNKKSMDHWNSKMKKLAQSPSPNIVSVFQVSYDELTTAQKDAFLDIACFRSQDKDYVESLLASSDLGSAEAMSAVKSLTDKFLINTCDGRVEMHDLLYKFSREVDLKASNQDGSRQRRLWLHQHIIKGGIINVLQNKMKAANVRGIFLDLSEVEDETSLDRDHFINMGNLRYLKFYNSHCPQECKTNNKINIPDKLKLPLKEVRCLHWLKFPLETLPNDFNPINLVDLKLPYSEMEQLWEGDKDTPCLRWVDLNHSSKLCSLSGLSKAEKLQRLNLEGCTTLKAFPHDMKKMKMLAFLNLKGCTSLESLPEMNLISLKTLTLSGCSTFKEFPLISDNIETLYLDGTAISQLPMNMEKLQRLVVLNMKDCKMLEEIPGRVGELKALQELILSDCLNLKIFPEIDISFLNILLLDGTAIEVMPQLPSVQYLCLSRNAKISCLPVGISQLSQLKWLDLKYCTSLTSVPEFPPNLQCLDAHGCSSLKTVSKPLARIMPTEQNHSTFIFTNCENLEQAAKEEITSYAQRKCQLLSYARKRHNGGLVSESLFSTCFPGCEVPSWFCHETVGSELEVKLLPHWHDKKLAGIALCAVVSCLDPQDQVSRLSVTCTFKVKDEDKSWVPYTCPVGSWTRHGGGKDKIELDHVFIGYTSCPHTIKCHEEGNSDECNPTEASLKFTVTGGTSENGKYKVLKCGLSLVYAKDKDKNSALETKYDMLIGKSFQETSEGVDGRVKKTKGKYVMPVEKNFQETTEGVDGRVKKKKKTRMDNGRPKKKQRSGRDDNQTRMQVELQEGNINSVIMHTVKNF.

Positions 14–175 constitute a TIR domain; it reads PQHQVFINFR…EIVKAVKTAL (162 aa). Glu88 is a catalytic residue. Residues 211-472 enclose the NB-ARC domain; that stretch reads EQRLKDLEEK…FRSQDKDYVE (262 aa). 11 LRR repeats span residues 260 to 285, 436 to 459, 614 to 636, 637 to 659, 682 to 706, 708 to 728, 729 to 749, 750 to 774, 796 to 818, 819 to 842, and 861 to 887; these read HALI…LLGE, PNIV…AFLD, LKEV…DFNP, INLV…DKDT, AEKL…MKKM, MLAF…EMNL, ISLK…PLIS, DNIE…KLQR, LKAL…EIDI, SFLN…SVQY, and LSQL…NLQC. A disordered region spans residues 1162 to 1195; it reads TEGVDGRVKKKKKTRMDNGRPKKKQRSGRDDNQT. Positions 1170–1177 match the Nuclear localization signal motif; sequence KKKKKTRM.

As to quaternary structure, interacts with EDS1.

The protein resides in the nucleus. The enzyme catalyses NAD(+) + H2O = ADP-D-ribose + nicotinamide + H(+). The chain is Inactive disease resistance protein RPS4 (RPS4) from Arabidopsis thaliana (Mouse-ear cress).